The sequence spans 122 residues: Large ribosomal subunit protein uL14 (122 aa).

Belongs to the universal ribosomal protein uL14 family. In terms of assembly, part of the 50S ribosomal subunit. Forms a cluster with proteins L3 and L19. In the 70S ribosome, L14 and L19 interact and together make contacts with the 16S rRNA in bridges B5 and B8.

Functionally, binds to 23S rRNA. Forms part of two intersubunit bridges in the 70S ribosome. In Nitrosomonas europaea (strain ATCC 19718 / CIP 103999 / KCTC 2705 / NBRC 14298), this protein is Large ribosomal subunit protein uL14.